A 234-amino-acid chain; its full sequence is Large ribosomal subunit protein uL1 (234 aa).

This sequence belongs to the universal ribosomal protein uL1 family. As to quaternary structure, part of the 50S ribosomal subunit.

Functionally, binds directly to 23S rRNA. The L1 stalk is quite mobile in the ribosome, and is involved in E site tRNA release. Its function is as follows. Protein L1 is also a translational repressor protein, it controls the translation of the L11 operon by binding to its mRNA. This Cronobacter sakazakii (strain ATCC BAA-894) (Enterobacter sakazakii) protein is Large ribosomal subunit protein uL1.